Consider the following 397-residue polypeptide: Putative teichuronic acid biosynthesis glycosyltransferase TuaH (397 aa).

The protein belongs to the glycosyltransferase group 1 family.

The protein operates within cell wall biogenesis; teichuronic acid biosynthesis. The protein is Putative teichuronic acid biosynthesis glycosyltransferase TuaH (tuaH) of Bacillus subtilis (strain 168).